Here is a 251-residue protein sequence, read N- to C-terminus: Ubiquinone/menaquinone biosynthesis C-methyltransferase UbiE (251 aa).

S-adenosyl-L-methionine contacts are provided by residues Thr74, Asp95, 123 to 124 (NA), and Ser140.

It belongs to the class I-like SAM-binding methyltransferase superfamily. MenG/UbiE family.

It carries out the reaction a 2-demethylmenaquinol + S-adenosyl-L-methionine = a menaquinol + S-adenosyl-L-homocysteine + H(+). It catalyses the reaction a 2-methoxy-6-(all-trans-polyprenyl)benzene-1,4-diol + S-adenosyl-L-methionine = a 5-methoxy-2-methyl-3-(all-trans-polyprenyl)benzene-1,4-diol + S-adenosyl-L-homocysteine + H(+). It functions in the pathway quinol/quinone metabolism; menaquinone biosynthesis; menaquinol from 1,4-dihydroxy-2-naphthoate: step 2/2. Its pathway is cofactor biosynthesis; ubiquinone biosynthesis. Methyltransferase required for the conversion of demethylmenaquinol (DMKH2) to menaquinol (MKH2) and the conversion of 2-polyprenyl-6-methoxy-1,4-benzoquinol (DDMQH2) to 2-polyprenyl-3-methyl-6-methoxy-1,4-benzoquinol (DMQH2). In Escherichia fergusonii (strain ATCC 35469 / DSM 13698 / CCUG 18766 / IAM 14443 / JCM 21226 / LMG 7866 / NBRC 102419 / NCTC 12128 / CDC 0568-73), this protein is Ubiquinone/menaquinone biosynthesis C-methyltransferase UbiE.